Here is a 382-residue protein sequence, read N- to C-terminus: Porin-like protein BU359 (382 aa).

A signal peptide spans 1-23 (MTNRKSLAMVIPMLLAASNGVNA).

Belongs to the Gram-negative porin family. Homotrimer.

It localises to the cell outer membrane. Functionally, forms pores that allow passive diffusion of small molecules across the membrane. This chain is Porin-like protein BU359, found in Buchnera aphidicola subsp. Acyrthosiphon pisum (strain APS) (Acyrthosiphon pisum symbiotic bacterium).